The sequence spans 288 residues: Phosphate import ATP-binding protein PstB (288 aa).

Positions 42 to 283 constitute an ABC transporter domain; it reads IRDLNFYYEN…PKEKKTRDYI (242 aa). ATP is bound at residue 74-81; the sequence is GPSGCGKS.

It belongs to the ABC transporter superfamily. Phosphate importer (TC 3.A.1.7) family. The complex is composed of two ATP-binding proteins (PstB), two transmembrane proteins (PstC and PstA) and a solute-binding protein (PstS).

It is found in the cell membrane. It carries out the reaction phosphate(out) + ATP + H2O = ADP + 2 phosphate(in) + H(+). Its function is as follows. Part of the ABC transporter complex PstSACB involved in phosphate import. Responsible for energy coupling to the transport system. The protein is Phosphate import ATP-binding protein PstB of Malacoplasma penetrans (strain HF-2) (Mycoplasma penetrans).